The sequence spans 316 residues: Mycothiol acetyltransferase (316 aa).

N-acetyltransferase domains are found at residues 16–153 (REVR…VPAV) and 156–316 (VRIR…PAAN). Glu-36 is a binding site for 1D-myo-inositol 2-(L-cysteinylamino)-2-deoxy-alpha-D-glucopyranoside. Residues 83–85 (LVV) and 91–96 (RRGIGS) contribute to the acetyl-CoA site. Residues Glu-183, Lys-228, and Glu-238 each contribute to the 1D-myo-inositol 2-(L-cysteinylamino)-2-deoxy-alpha-D-glucopyranoside site. Acetyl-CoA is bound by residues 242–244 (VGV) and 249–255 (QGRGLGQ). Residue Tyr-283 coordinates 1D-myo-inositol 2-(L-cysteinylamino)-2-deoxy-alpha-D-glucopyranoside. 288 to 293 (NVAAVR) is a binding site for acetyl-CoA.

It belongs to the acetyltransferase family. MshD subfamily. Monomer.

It catalyses the reaction 1D-myo-inositol 2-(L-cysteinylamino)-2-deoxy-alpha-D-glucopyranoside + acetyl-CoA = mycothiol + CoA + H(+). Its function is as follows. Catalyzes the transfer of acetyl from acetyl-CoA to desacetylmycothiol (Cys-GlcN-Ins) to form mycothiol. The chain is Mycothiol acetyltransferase from Mycobacterium avium (strain 104).